Consider the following 120-residue polypeptide: Small ribosomal subunit protein bS16 (120 aa).

The interval 80 to 120 (GLKKRPARNNPHKGEPGKKAQERIAAAKQAAEDAKAAEASA) is disordered. A compositionally biased stretch (basic residues) spans 81–90 (LKKRPARNNP). 2 stretches are compositionally biased toward basic and acidic residues: residues 91–101 (HKGEPGKKAQE) and 109–120 (AAEDAKAAEASA).

This sequence belongs to the bacterial ribosomal protein bS16 family.

The protein is Small ribosomal subunit protein bS16 of Bartonella bacilliformis (strain ATCC 35685 / KC583 / Herrer 020/F12,63).